The sequence spans 100 residues: Large ribosomal subunit protein bL27 (100 aa).

Residues 1–9 (MLKMNLQLF) constitute a propeptide that is removed on maturation.

This sequence belongs to the bacterial ribosomal protein bL27 family. Post-translationally, the N-terminus is cleaved by ribosomal processing cysteine protease Prp.

This chain is Large ribosomal subunit protein bL27, found in Clostridium perfringens (strain ATCC 13124 / DSM 756 / JCM 1290 / NCIMB 6125 / NCTC 8237 / Type A).